The following is a 514-amino-acid chain: Ribonuclease Y (514 aa).

Residues 3 to 23 (YMIIYEIIAGILIVVAILIHF) traverse the membrane as a helical segment. The KH domain occupies 204-289 (TVHVVTLPND…EMVEKAEKEL (86 aa)). The HD domain occupies 330–423 (VLKHSVEVAY…VQAADAISAA (94 aa)).

It belongs to the RNase Y family.

Its subcellular location is the cell membrane. Endoribonuclease that initiates mRNA decay. The chain is Ribonuclease Y from Clostridium kluyveri (strain ATCC 8527 / DSM 555 / NBRC 12016 / NCIMB 10680 / K1).